Reading from the N-terminus, the 489-residue chain is Cobyric acid synthase (489 aa).

A GATase cobBQ-type domain is found at 254-442 (ARVIAVPVLP…VHGLFADDRQ (189 aa)). Cys-336 serves as the catalytic Nucleophile. His-434 is a catalytic residue.

This sequence belongs to the CobB/CobQ family. CobQ subfamily.

It participates in cofactor biosynthesis; adenosylcobalamin biosynthesis. Catalyzes amidations at positions B, D, E, and G on adenosylcobyrinic A,C-diamide. NH(2) groups are provided by glutamine, and one molecule of ATP is hydrogenolyzed for each amidation. This Methylobacterium nodulans (strain LMG 21967 / CNCM I-2342 / ORS 2060) protein is Cobyric acid synthase.